We begin with the raw amino-acid sequence, 100 residues long: Small ribosomal subunit protein uS14c (100 aa).

This sequence belongs to the universal ribosomal protein uS14 family. In terms of assembly, part of the 30S ribosomal subunit.

The protein resides in the plastid. Its subcellular location is the chloroplast. Binds 16S rRNA, required for the assembly of 30S particles. The chain is Small ribosomal subunit protein uS14c from Tupiella akineta (Green alga).